The chain runs to 261 residues: 5'-nucleotidase SurE (261 aa).

A divalent metal cation-binding residues include Asp8, Asp9, Ser43, and Asn96.

This sequence belongs to the SurE nucleotidase family. A divalent metal cation is required as a cofactor.

The protein resides in the cytoplasm. The catalysed reaction is a ribonucleoside 5'-phosphate + H2O = a ribonucleoside + phosphate. Functionally, nucleotidase that shows phosphatase activity on nucleoside 5'-monophosphates. This Dinoroseobacter shibae (strain DSM 16493 / NCIMB 14021 / DFL 12) protein is 5'-nucleotidase SurE.